The primary structure comprises 465 residues: Glutamate--tRNA ligase (465 aa).

The short motif at 8–18 is the 'HIGH' region element; that stretch reads PSPTGHLHIGG. Zn(2+) is bound by residues Cys-97, Cys-99, Cys-124, and Glu-126. Positions 234–238 match the 'KMSKS' region motif; the sequence is RLSKR. Lys-237 contributes to the ATP binding site.

The protein belongs to the class-I aminoacyl-tRNA synthetase family. Glutamate--tRNA ligase type 1 subfamily. As to quaternary structure, monomer. Zn(2+) serves as cofactor.

The protein localises to the cytoplasm. The catalysed reaction is tRNA(Glu) + L-glutamate + ATP = L-glutamyl-tRNA(Glu) + AMP + diphosphate. Functionally, catalyzes the attachment of glutamate to tRNA(Glu) in a two-step reaction: glutamate is first activated by ATP to form Glu-AMP and then transferred to the acceptor end of tRNA(Glu). The chain is Glutamate--tRNA ligase from Thermodesulfovibrio yellowstonii (strain ATCC 51303 / DSM 11347 / YP87).